Reading from the N-terminus, the 127-residue chain is Small ribosomal subunit protein uS13 (127 aa).

A disordered region spans residues 95–127 (GLPLRGQRTKTNARTRRGKKGAAIGGKKKATKK).

The protein belongs to the universal ribosomal protein uS13 family. Part of the 30S ribosomal subunit. Forms a loose heterodimer with protein S19. Forms two bridges to the 50S subunit in the 70S ribosome.

Its function is as follows. Located at the top of the head of the 30S subunit, it contacts several helices of the 16S rRNA. In the 70S ribosome it contacts the 23S rRNA (bridge B1a) and protein L5 of the 50S subunit (bridge B1b), connecting the 2 subunits; these bridges are implicated in subunit movement. Contacts the tRNAs in the A and P-sites. This is Small ribosomal subunit protein uS13 from Herpetosiphon aurantiacus (strain ATCC 23779 / DSM 785 / 114-95).